The sequence spans 929 residues: Type I restriction enzyme SauCOLORF180P endonuclease subunit (929 aa).

Residues 254–418 (QQATETGNNG…DGRTTADIFG (165 aa)) form the Helicase ATP-binding domain. 268-274 (TTGSGKT) is an ATP binding site.

Belongs to the HsdR family. As to quaternary structure, the type I restriction/modification system is composed of three polypeptides R, M and S.

It catalyses the reaction Endonucleolytic cleavage of DNA to give random double-stranded fragments with terminal 5'-phosphates, ATP is simultaneously hydrolyzed.. Functionally, the restriction (R) subunit of a type I restriction enzyme that recognizes an undetermined sequence and cleaves a random distance away. Subunit R is required for both nuclease and ATPase activities, but not for modification. After locating a non-methylated recognition site, the enzyme complex serves as a molecular motor that translocates DNA in an ATP-dependent manner until a collision occurs that triggers cleavage. This Staphylococcus aureus (strain COL) protein is Type I restriction enzyme SauCOLORF180P endonuclease subunit.